The primary structure comprises 392 residues: Phospho-N-acetylmuramoyl-pentapeptide-transferase (392 aa).

10 helical membrane-spanning segments follow: residues 24 to 44 (YLTF…LLAG), 76 to 96 (TMGG…WFDL), 100 to 120 (FVWV…VDDW), 137 to 157 (YFWQ…CISE), 193 to 213 (VSYP…IVGS), 225 to 245 (GLAI…AYVT), 262 to 282 (AGEL…FLWF), 289 to 309 (VFMG…IAII), 314 to 334 (IVLA…MLQV), and 369 to 389 (QVVV…LTTL).

This sequence belongs to the glycosyltransferase 4 family. MraY subfamily. Mg(2+) is required as a cofactor.

It localises to the cell inner membrane. The enzyme catalyses UDP-N-acetyl-alpha-D-muramoyl-L-alanyl-gamma-D-glutamyl-meso-2,6-diaminopimeloyl-D-alanyl-D-alanine + di-trans,octa-cis-undecaprenyl phosphate = di-trans,octa-cis-undecaprenyl diphospho-N-acetyl-alpha-D-muramoyl-L-alanyl-D-glutamyl-meso-2,6-diaminopimeloyl-D-alanyl-D-alanine + UMP. It participates in cell wall biogenesis; peptidoglycan biosynthesis. Its function is as follows. Catalyzes the initial step of the lipid cycle reactions in the biosynthesis of the cell wall peptidoglycan: transfers peptidoglycan precursor phospho-MurNAc-pentapeptide from UDP-MurNAc-pentapeptide onto the lipid carrier undecaprenyl phosphate, yielding undecaprenyl-pyrophosphoryl-MurNAc-pentapeptide, known as lipid I. The protein is Phospho-N-acetylmuramoyl-pentapeptide-transferase of Paracidovorax citrulli (strain AAC00-1) (Acidovorax citrulli).